A 282-amino-acid polypeptide reads, in one-letter code: WRKY transcription factor 71 (282 aa).

A disordered region spans residues 63 to 121 (LTSNSPVVSSSSNEGEPKENTNDKSDQMEDNEGDLHGVGESSKQLTKQGKKKGEKKERE). Positions 65–75 (SNSPVVSSSSN) are enriched in low complexity. Basic and acidic residues predominate over residues 77-99 (GEPKENTNDKSDQMEDNEGDLHG). The segment at residues 130–195 (SEIDHLEDGY…YEGKHNHPIP (66 aa)) is a DNA-binding region (WRKY).

Belongs to the WRKY group II-c family.

It is found in the nucleus. In terms of biological role, transcription factor. Interacts specifically with the W box (5'-(T)TGAC[CT]-3'), a frequently occurring elicitor-responsive cis-acting element. In Arabidopsis thaliana (Mouse-ear cress), this protein is WRKY transcription factor 71 (WRKY71).